A 664-amino-acid chain; its full sequence is MNSRPLLVTCGLPYTNGPCHLGHLRTYVPADFYVRFMRRKGEEVVFICGSDNHGTPIVVSAEKEGTTPRQISERYHTHFSDTFTKMQVHFDHFGMTDDPTTHARTKHLVSRLIDRGYVYPKVIQQAYCIHCQKFLPDRYLEGICPHCKKPARGDECDQGCGKHLEPGEILEPTCKICGNRAEYREQEHFFFKLSGFQDWLREYLGELKGTDNAINYALGWVNEDLHDWCITRTLEWGVKFPGHDDLVVYVWVDAPIGYIGFTEEWAEKTGRDWKTYWCGENTRVTHFIGQDITYHHCVFWPAMLHGAGYGTPYAVVASGMLKIDDHKFSKSRGYVVWTNEDYLDQGLPADYLRYYLLSYTSHTKEMNFSWQLFQERINNEVVNNLGNFIYRSLHLSQKQFGGVPEGVVEQEIFDRITEAIGQVTGLVEAYDFKGAVDAILALSAWGNTYIQSKEPWKLAKTDQAAMAQVMRNCLQLAKALTLLIEPVMPERAGLIWSQLGQDSLIANNGFSAGLEPLSPGPLPAPSIVFSKIDDKMTQELDKRLRDRIDALDAEKKPKTPEISIEEFAKVEMKTGKILSAEQVPKSTKLLKLQVSIGDEVRQIVSGIAQFHNPEELVGKDVVVCTNLKPAKIFGIESNGMILAAGDNASLLRPETPVPSGTKIR.

The 'HIGH' region motif lies at 13–23; it reads PYTNGPCHLGH. 4 residues coordinate Zn(2+): Cys-144, Cys-147, Cys-156, and Cys-160. Positions 327-331 match the 'KMSKS' region motif; that stretch reads KFSKS. ATP is bound at residue Lys-330. Residues 566 to 664 form the tRNA-binding domain; sequence EFAKVEMKTG…TPVPSGTKIR (99 aa).

It belongs to the class-I aminoacyl-tRNA synthetase family. MetG type 1 subfamily. Homodimer. Requires Zn(2+) as cofactor.

The protein localises to the cytoplasm. It carries out the reaction tRNA(Met) + L-methionine + ATP = L-methionyl-tRNA(Met) + AMP + diphosphate. Functionally, is required not only for elongation of protein synthesis but also for the initiation of all mRNA translation through initiator tRNA(fMet) aminoacylation. This chain is Methionine--tRNA ligase, found in Methanospirillum hungatei JF-1 (strain ATCC 27890 / DSM 864 / NBRC 100397 / JF-1).